The chain runs to 345 residues: Anthranilate phosphoribosyltransferase (345 aa).

Residues G84, 87 to 88, T92, 94 to 97, 112 to 120, and S124 each bind 5-phospho-alpha-D-ribose 1-diphosphate; these read GD, NIST, and KHGNRSVSS. G84 contacts anthranilate. Mg(2+) is bound at residue S96. N115 contributes to the anthranilate binding site. R170 is an anthranilate binding site. Mg(2+) is bound by residues D229 and E230.

The protein belongs to the anthranilate phosphoribosyltransferase family. Homodimer. Mg(2+) is required as a cofactor.

The catalysed reaction is N-(5-phospho-beta-D-ribosyl)anthranilate + diphosphate = 5-phospho-alpha-D-ribose 1-diphosphate + anthranilate. Its pathway is amino-acid biosynthesis; L-tryptophan biosynthesis; L-tryptophan from chorismate: step 2/5. Its function is as follows. Catalyzes the transfer of the phosphoribosyl group of 5-phosphorylribose-1-pyrophosphate (PRPP) to anthranilate to yield N-(5'-phosphoribosyl)-anthranilate (PRA). This is Anthranilate phosphoribosyltransferase from Xanthomonas euvesicatoria pv. vesicatoria (strain 85-10) (Xanthomonas campestris pv. vesicatoria).